The following is a 124-amino-acid chain: Small ribosomal subunit protein uS13 (124 aa).

The interval 96–124 (LPVRGQRTKTNARTRKGPRRTVAGKKKAK) is disordered.

It belongs to the universal ribosomal protein uS13 family. In terms of assembly, part of the 30S ribosomal subunit. Forms a loose heterodimer with protein S19. Forms two bridges to the 50S subunit in the 70S ribosome.

Its function is as follows. Located at the top of the head of the 30S subunit, it contacts several helices of the 16S rRNA. In the 70S ribosome it contacts the 23S rRNA (bridge B1a) and protein L5 of the 50S subunit (bridge B1b), connecting the 2 subunits; these bridges are implicated in subunit movement. Contacts the tRNAs in the A and P-sites. The protein is Small ribosomal subunit protein uS13 of Symbiobacterium thermophilum (strain DSM 24528 / JCM 14929 / IAM 14863 / T).